We begin with the raw amino-acid sequence, 219 residues long: 2-hydroxy-3-keto-5-methylthiopentenyl-1-phosphate phosphatase (219 aa).

The protein belongs to the HAD-like hydrolase superfamily. MtnX family.

It carries out the reaction 2-hydroxy-5-methylsulfanyl-3-oxopent-1-enyl phosphate + H2O = 1,2-dihydroxy-5-(methylsulfanyl)pent-1-en-3-one + phosphate. The protein operates within amino-acid biosynthesis; L-methionine biosynthesis via salvage pathway; L-methionine from S-methyl-5-thio-alpha-D-ribose 1-phosphate: step 4/6. Its function is as follows. Dephosphorylates 2-hydroxy-3-keto-5-methylthiopentenyl-1-phosphate (HK-MTPenyl-1-P) yielding 1,2-dihydroxy-3-keto-5-methylthiopentene (DHK-MTPene). This is 2-hydroxy-3-keto-5-methylthiopentenyl-1-phosphate phosphatase from Bacillus cereus (strain ATCC 10987 / NRS 248).